The chain runs to 454 residues: N-lysine methyltransferase setd6 (454 aa).

Residues 38-265 (PKVYISTEGT…AGQELFNTYG (228 aa)) enclose the SET domain.

This sequence belongs to the class V-like SAM-binding methyltransferase superfamily. Histone-lysine methyltransferase family. SETD6 subfamily.

Its subcellular location is the nucleus. Protein-lysine N-methyltransferase. This chain is N-lysine methyltransferase setd6 (setd6), found in Xenopus tropicalis (Western clawed frog).